The following is a 208-amino-acid chain: Protein late bloomer (208 aa).

4 consecutive transmembrane segments (helical) span residues 10 to 30 (IASI…IGWI), 41 to 61 (FVIA…LGIF), 67 to 87 (SVVL…LQIV), and 174 to 194 (FIIV…LAVF).

It belongs to the tetraspanin (TM4SF) family. Transiently expressed on motor axons, growth cones and terminal arbors.

It is found in the membrane. The protein resides in the synapse. Its function is as follows. Facilitates synapse formation. The chain is Protein late bloomer (lbm) from Drosophila melanogaster (Fruit fly).